The following is a 122-amino-acid chain: Large ribosomal subunit protein uL14 (122 aa).

The protein belongs to the universal ribosomal protein uL14 family. Part of the 50S ribosomal subunit. Forms a cluster with proteins L3 and L19. In the 70S ribosome, L14 and L19 interact and together make contacts with the 16S rRNA in bridges B5 and B8.

In terms of biological role, binds to 23S rRNA. Forms part of two intersubunit bridges in the 70S ribosome. The polypeptide is Large ribosomal subunit protein uL14 (Clostridium botulinum (strain 657 / Type Ba4)).